Reading from the N-terminus, the 251-residue chain is GTP cyclohydrolase 1 type 2 homolog (251 aa).

A divalent metal cation contacts are provided by H63, H64, D101, H219, and E223.

The protein belongs to the GTP cyclohydrolase I type 2/NIF3 family. As to quaternary structure, homohexamer.

The chain is GTP cyclohydrolase 1 type 2 homolog from Pasteurella multocida (strain Pm70).